A 279-amino-acid chain; its full sequence is Thymidylate synthase 1 (279 aa).

141-142 (RR) is a binding site for dUMP. Catalysis depends on cysteine 161, which acts as the Nucleophile. Residues 181 to 184 (RSND), asparagine 192, and 222 to 224 (HVY) each bind dUMP. Aspartate 184 is a binding site for (6R)-5,10-methylene-5,6,7,8-tetrahydrofolate. Alanine 278 contacts (6R)-5,10-methylene-5,6,7,8-tetrahydrofolate.

This sequence belongs to the thymidylate synthase family. Bacterial-type ThyA subfamily. Homodimer.

It is found in the cytoplasm. The enzyme catalyses dUMP + (6R)-5,10-methylene-5,6,7,8-tetrahydrofolate = 7,8-dihydrofolate + dTMP. It participates in pyrimidine metabolism; dTTP biosynthesis. Catalyzes the reductive methylation of 2'-deoxyuridine-5'-monophosphate (dUMP) to 2'-deoxythymidine-5'-monophosphate (dTMP) while utilizing 5,10-methylenetetrahydrofolate (mTHF) as the methyl donor and reductant in the reaction, yielding dihydrofolate (DHF) as a by-product. This enzymatic reaction provides an intracellular de novo source of dTMP, an essential precursor for DNA biosynthesis. The protein is Thymidylate synthase 1 of Bacillus subtilis (strain 168).